A 436-amino-acid polypeptide reads, in one-letter code: Adenylosuccinate synthetase (436 aa).

GTP contacts are provided by residues 12 to 18 (GDEGKGK) and 40 to 42 (GHT). The active-site Proton acceptor is Asp13. Positions 13 and 40 each coordinate Mg(2+). Residues 13–16 (DEGK), 38–41 (NAGH), Thr130, Arg144, Gln230, Thr245, and Arg309 each bind IMP. The active-site Proton donor is His41. 305–311 (TTTGRPR) is a binding site for substrate. GTP contacts are provided by residues Arg311, 337–339 (KLD), and 419–421 (SVG).

The protein belongs to the adenylosuccinate synthetase family. In terms of assembly, homodimer. Mg(2+) is required as a cofactor.

It is found in the cytoplasm. It catalyses the reaction IMP + L-aspartate + GTP = N(6)-(1,2-dicarboxyethyl)-AMP + GDP + phosphate + 2 H(+). The protein operates within purine metabolism; AMP biosynthesis via de novo pathway; AMP from IMP: step 1/2. Its function is as follows. Plays an important role in the de novo pathway of purine nucleotide biosynthesis. Catalyzes the first committed step in the biosynthesis of AMP from IMP. This Myxococcus xanthus (strain DK1622) protein is Adenylosuccinate synthetase.